Consider the following 161-residue polypeptide: Shikimate kinase (161 aa).

Position 10–15 (10–15 (GAGKTT)) interacts with ATP. Mg(2+) is bound at residue threonine 14. The substrate site is built by aspartate 28, arginine 52, and glycine 74. Arginine 114 contributes to the ATP binding site. Arginine 132 is a substrate binding site.

The protein belongs to the shikimate kinase family. As to quaternary structure, monomer. Requires Mg(2+) as cofactor.

It localises to the cytoplasm. It carries out the reaction shikimate + ATP = 3-phosphoshikimate + ADP + H(+). It participates in metabolic intermediate biosynthesis; chorismate biosynthesis; chorismate from D-erythrose 4-phosphate and phosphoenolpyruvate: step 5/7. Its function is as follows. Catalyzes the specific phosphorylation of the 3-hydroxyl group of shikimic acid using ATP as a cosubstrate. This Streptococcus gordonii (strain Challis / ATCC 35105 / BCRC 15272 / CH1 / DL1 / V288) protein is Shikimate kinase.